The sequence spans 488 residues: Cobyric acid synthase (488 aa).

In terms of domain architecture, GATase cobBQ-type spans 252–440 (VPLIAVLRFP…VHGLFANDRQ (189 aa)). Catalysis depends on Cys-334, which acts as the Nucleophile. His-432 is an active-site residue.

This sequence belongs to the CobB/CobQ family. CobQ subfamily.

It functions in the pathway cofactor biosynthesis; adenosylcobalamin biosynthesis. Catalyzes amidations at positions B, D, E, and G on adenosylcobyrinic A,C-diamide. NH(2) groups are provided by glutamine, and one molecule of ATP is hydrogenolyzed for each amidation. The sequence is that of Cobyric acid synthase from Methylorubrum populi (strain ATCC BAA-705 / NCIMB 13946 / BJ001) (Methylobacterium populi).